The sequence spans 553 residues: Copine-9 (553 aa).

2 consecutive C2 domains span residues 1–125 and 132–255; these read MSLG…ERTL and KCGT…FTVY. A glycan (N-linked (GlcNAc...) asparagine) is linked at asparagine 95. Positions 163, 169, 225, 227, and 233 each coordinate Ca(2+). A VWFA domain is found at 299–500; that stretch reads NFTVAIDFTA…VQFVPFRDYV (202 aa). The segment at 531 to 553 is disordered; that stretch reads TRDIQPRPPPPANPSPIPAPEQP. Positions 536-553 are enriched in pro residues; it reads PRPPPPANPSPIPAPEQP.

It belongs to the copine family. Ca(2+) is required as a cofactor. Expressed in melanocytes.

Its function is as follows. Probable calcium-dependent phospholipid-binding protein that may play a role in calcium-mediated intracellular processes. Plays a role in dendrite formation by melanocytes. The protein is Copine-9 of Homo sapiens (Human).